A 179-amino-acid chain; its full sequence is NAD(P)H-quinone oxidoreductase subunit J (179 aa).

Belongs to the complex I 30 kDa subunit family. As to quaternary structure, NDH-1 can be composed of about 15 different subunits; different subcomplexes with different compositions have been identified which probably have different functions. In at one experiment the initiator methionine has been seen to be kept and removed.

It localises to the cellular thylakoid membrane. It catalyses the reaction a plastoquinone + NADH + (n+1) H(+)(in) = a plastoquinol + NAD(+) + n H(+)(out). The enzyme catalyses a plastoquinone + NADPH + (n+1) H(+)(in) = a plastoquinol + NADP(+) + n H(+)(out). NDH-1 shuttles electrons from an unknown electron donor, via FMN and iron-sulfur (Fe-S) centers, to quinones in the respiratory and/or the photosynthetic chain. The immediate electron acceptor for the enzyme in this species is believed to be plastoquinone. Couples the redox reaction to proton translocation, and thus conserves the redox energy in a proton gradient. Cyanobacterial NDH-1 also plays a role in inorganic carbon-concentration. This Synechocystis sp. (strain ATCC 27184 / PCC 6803 / Kazusa) protein is NAD(P)H-quinone oxidoreductase subunit J.